An 882-amino-acid polypeptide reads, in one-letter code: Ion channel DMI1 (882 aa).

Residues 1 to 122 (MAKSNEESSN…PSSSSITKQQ (122 aa)) are disordered. Over residues 48–62 (TSTTKTDFSEQQWNY) the composition is skewed to polar residues. Positions 78–95 (PPPPPSKPPVNLIPPHPR) are enriched in pro residues. Residues 107-117 (SSLLPQPSSSS) are compositionally biased toward low complexity. The next 4 membrane-spanning stretches (helical) occupy residues 129 to 149 (SPIFYLLVICCIILVPYSAYL), 192 to 212 (TIALYIVLFTLILPFVLYKYL), 255 to 275 (LALLCATLFLIAFGGLALYAV), and 307 to 327 (IVSVSISAGGMLIFAMMLGLV). RCK N-terminal domains are found at residues 348 to 489 (RNHV…ETVV) and 608 to 757 (PEKI…DKSI). Residues 378 to 403 (VIVVLAEKEKEEMEMDIAKLEFDFMG) are a coiled coil.

This sequence belongs to the castor/pollux (TC 1.A.1.23) family. In terms of assembly, interacts (via c-terminus) with CNGC15A, CNGC15B and CNGC15C (via N-terminus). The Nod factor has no effect on these interactions, implying that the complex is maintained after activation. As to expression, mainly expressed in roots and nodules. Also detected in pods, flowers, leaves, and stems.

Its subcellular location is the nucleus membrane. In terms of biological role, required for early signal transduction events leading to endosymbiosis. Acts early in a signal transduction chain leading from the perception of Nod factor to the activation of calcium spiking. Also involved in mycorrhizal symbiosis. May be involved in the regulation of the calcium channel responsible for calcium spiking by mobilizing another cation, and thereby altering the membrane potential. The protein is Ion channel DMI1 of Medicago truncatula (Barrel medic).